A 550-amino-acid polypeptide reads, in one-letter code: Glucose-6-phosphate isomerase (550 aa).

The Proton donor role is filled by E356. Catalysis depends on residues H387 and K515.

It belongs to the GPI family.

The protein resides in the cytoplasm. The catalysed reaction is alpha-D-glucose 6-phosphate = beta-D-fructose 6-phosphate. Its pathway is carbohydrate biosynthesis; gluconeogenesis. It participates in carbohydrate degradation; glycolysis; D-glyceraldehyde 3-phosphate and glycerone phosphate from D-glucose: step 2/4. Its function is as follows. Catalyzes the reversible isomerization of glucose-6-phosphate to fructose-6-phosphate. This Vibrio parahaemolyticus serotype O3:K6 (strain RIMD 2210633) protein is Glucose-6-phosphate isomerase.